The primary structure comprises 859 residues: Heterogeneous nuclear ribonucleoprotein U-like protein 1 (859 aa).

The segment at 1–103 (MDVRRLKVNE…GPDGHYVMDN (103 aa)) is necessary for interaction with HRMT1L1. The region spanning 3 to 37 (VRRLKVNELREELQRRGLDTRGLKAELAERLLAAL) is the SAP domain. Positions 36 to 131 (ALEAEEPEDE…SSYDRRPLDM (96 aa)) are disordered. The span at 38-54 (EAEEPEDERELEADDDP) shows a compositional bias: acidic residues. Over residues 77 to 88 (QPPPPGLQPHPE) the composition is skewed to pro residues. K117 participates in a covalent cross-link: Glycyl lysine isopeptide (Lys-Gly) (interchain with G-Cter in SUMO1); alternate. K117 is covalently cross-linked (Glycyl lysine isopeptide (Lys-Gly) (interchain with G-Cter in SUMO2); alternate). Residues 118–130 (QENESSYDRRPLD) show a composition bias toward basic and acidic residues. Residue K143 forms a Glycyl lysine isopeptide (Lys-Gly) (interchain with G-Cter in SUMO1); alternate linkage. K143 is covalently cross-linked (Glycyl lysine isopeptide (Lys-Gly) (interchain with G-Cter in SUMO2); alternate). Positions 146 to 206 (MKQEAPPSFL…QPPAEEDEDD (61 aa)) are disordered. Residues K147 and K163 each participate in a glycyl lysine isopeptide (Lys-Gly) (interchain with G-Cter in SUMO2) cross-link. The span at 174 to 193 (RPFEENRGRGYFEHREDRRG) shows a compositional bias: basic and acidic residues. Residues 192–389 (RGRSPQPPAE…VEFNFGQRAE (198 aa)) form the B30.2/SPRY domain. Position 195 is a phosphoserine (S195). The residue at position 210 (T210) is a Phosphothreonine. Residues 214–859 (IDTYNCDLHF…GSTQGGTSTQ (646 aa)) form a necessary for interaction with TP53 region. Residues K271 and K450 each participate in a glycyl lysine isopeptide (Lys-Gly) (interchain with G-Cter in SUMO2) cross-link. Positions 457 to 595 (NAIMDKMRVM…EEADKLVRQY (139 aa)) are necessary for interaction with BRD7 and transcriptional activation. A Phosphoserine modification is found at S513. K540 participates in a covalent cross-link: Glycyl lysine isopeptide (Lys-Gly) (interchain with G-Cter in SUMO2). Basic and acidic residues predominate over residues 595–612 (YNEEGRKAGPPPEKRFDS). The tract at residues 595-814 (YNEEGRKAGP…PPTAQTYPQP (220 aa)) is disordered. A run of 5 repeats spans residues 613–615 (RGG), 620–622 (RGG), 639–641 (RGG), 645–647 (RGG), and 659–661 (RGG). Composition is skewed to gly residues over residues 613 to 626 (RGGG…GGGF) and 634 to 670 (PPGG…GGGY). The interval 613–661 (RGGGFRGRGGGGGFQRYDNRGPPGGNRGGFQNRGGGGGSGGGGGNYRGG) is 5 X 3 AA repeats of R-G-G. The segment at 613–661 (RGGGFRGRGGGGGFQRYDNRGPPGGNRGGFQNRGGGGGSGGGGGNYRGG) is necessary for transcription repression. R639 bears the Asymmetric dimethylarginine mark. R645 and R659 each carry asymmetric dimethylarginine; alternate. 2 positions are modified to omega-N-methylarginine; alternate: R645 and R659. An omega-N-methylarginine mark is found at R664 and R674. Residues 671–696 (NQNRWGNNNRDNNNSNNRGNYNRAPQ) show a composition bias toward low complexity. A compositionally biased stretch (pro residues) spans 697–720 (QQPPPQQPPPPQPPPQQPPPPPSY). A Phosphoserine modification is found at S721. Residues 728–744 (GASSYNKNSNIPGSSAN) show a composition bias toward polar residues. Low complexity predominate over residues 745–775 (TSTPTVSSYTPPQPSYSQPPYNQGGYTQGYT). Composition is skewed to pro residues over residues 776-786 (APPPPPPPPPA) and 796-807 (NPAPYTPPPPPT).

In terms of assembly, interacts with BRD7, PRMT2, TP53 and NXF1. Associates with histones and BRD7. Post-translationally, methylated.

It localises to the nucleus. In terms of biological role, acts as a basic transcriptional regulator. Represses basic transcription driven by several virus and cellular promoters. When associated with BRD7, activates transcription of glucocorticoid-responsive promoter in the absence of ligand-stimulation. Also plays a role in mRNA processing and transport. Binds avidly to poly(G) and poly(C) RNA homopolymers in vitro. The sequence is that of Heterogeneous nuclear ribonucleoprotein U-like protein 1 (Hnrnpul1) from Mus musculus (Mouse).